The chain runs to 292 residues: Protein/nucleic acid deglycase HchA (292 aa).

A compositionally biased stretch (polar residues) spans 1 to 12; sequence MSQDVNELSKQP. Residues 1 to 23 form a disordered region; it reads MSQDVNELSKQPTPDKAEDNAFF. The active-site Nucleophile is cysteine 190.

Belongs to the peptidase C56 family. HchA subfamily.

It is found in the cytoplasm. It carries out the reaction N(omega)-(1-hydroxy-2-oxopropyl)-L-arginyl-[protein] + H2O = lactate + L-arginyl-[protein] + H(+). The enzyme catalyses N(6)-(1-hydroxy-2-oxopropyl)-L-lysyl-[protein] + H2O = lactate + L-lysyl-[protein] + H(+). It catalyses the reaction S-(1-hydroxy-2-oxopropyl)-L-cysteinyl-[protein] + H2O = lactate + L-cysteinyl-[protein] + H(+). The catalysed reaction is N(omega)-(1-hydroxy-2-oxoethyl)-L-arginyl-[protein] + H2O = L-arginyl-[protein] + glycolate + H(+). It carries out the reaction N(6)-(1-hydroxy-2-oxoethyl)-L-lysyl-[protein] + H2O = glycolate + L-lysyl-[protein] + H(+). The enzyme catalyses S-(1-hydroxy-2-oxoethyl)-L-cysteinyl-[protein] + H2O = glycolate + L-cysteinyl-[protein] + H(+). It catalyses the reaction N(2)-(1-hydroxy-2-oxopropyl)-dGTP + H2O = lactate + dGTP + H(+). The catalysed reaction is N(2)-(1-hydroxy-2-oxopropyl)-GTP + H2O = lactate + GTP + H(+). It carries out the reaction N(2)-(1-hydroxy-2-oxopropyl)-GDP + H2O = lactate + GDP + H(+). The enzyme catalyses N(2)-(1-hydroxy-2-oxopropyl)-GMP + H2O = lactate + GMP + H(+). It catalyses the reaction N(2)-(1-hydroxy-2-oxoethyl)-dGTP + H2O = dGTP + glycolate + H(+). The catalysed reaction is N(2)-(1-hydroxy-2-oxoethyl)-GTP + H2O = glycolate + GTP + H(+). It carries out the reaction N(2)-(1-hydroxy-2-oxoethyl)-GDP + H2O = glycolate + GDP + H(+). The enzyme catalyses N(2)-(1-hydroxy-2-oxoethyl)-GMP + H2O = glycolate + GMP + H(+). It catalyses the reaction an N(2)-(1-hydroxy-2-oxopropyl)-guanosine in RNA + H2O = a guanosine in RNA + lactate + H(+). The catalysed reaction is an N(2)-(1-hydroxy-2-oxopropyl)-2'-deoxyguanosine in DNA + H2O = a 2'-deoxyguanosine in DNA + lactate + H(+). It carries out the reaction an N(2)-(1-hydroxy-2-oxoethyl)-guanosine in RNA + H2O = a guanosine in RNA + glycolate + H(+). The enzyme catalyses an N(2)-(1-hydroxy-2-oxoethyl)-2'-deoxyguanosine in DNA + H2O = a 2'-deoxyguanosine in DNA + glycolate + H(+). Protein and nucleotide deglycase that catalyzes the deglycation of the Maillard adducts formed between amino groups of proteins or nucleotides and reactive carbonyl groups of glyoxals. Thus, functions as a protein deglycase that repairs methylglyoxal- and glyoxal-glycated proteins, and releases repaired proteins and lactate or glycolate, respectively. Deglycates cysteine, arginine and lysine residues in proteins, and thus reactivates these proteins by reversing glycation by glyoxals. Acts on early glycation intermediates (hemithioacetals and aminocarbinols), preventing the formation of Schiff bases and advanced glycation endproducts (AGE). Also functions as a nucleotide deglycase able to repair glycated guanine in the free nucleotide pool (GTP, GDP, GMP, dGTP) and in DNA and RNA. Is thus involved in a major nucleotide repair system named guanine glycation repair (GG repair), dedicated to reversing methylglyoxal and glyoxal damage via nucleotide sanitization and direct nucleic acid repair. Plays an important role in protecting cells from carbonyl stress. This chain is Protein/nucleic acid deglycase HchA, found in Staphylococcus aureus (strain bovine RF122 / ET3-1).